Here is a 211-residue protein sequence, read N- to C-terminus: 5-formyltetrahydrofolate cyclo-ligase (211 aa).

4–8 (KQLLR) contributes to the ATP binding site. Residues Glu-56 and 152 to 156 (HGAGY) each bind substrate. ATP is bound by residues 151–158 (GHGAGYYD) and Asp-194.

Belongs to the 5-formyltetrahydrofolate cyclo-ligase family. In terms of processing, N-glycosylated.

Its subcellular location is the mitochondrion. It catalyses the reaction (6S)-5-formyl-5,6,7,8-tetrahydrofolate + ATP = (6R)-5,10-methenyltetrahydrofolate + ADP + phosphate. Its function is as follows. Only enzyme known to utilize 5-formyltetrahydrofolate (folinic acid) as substrate. Contributes to tetrahydrofolate metabolism in an alternative way of folate biosynthesis. May regulate carbon flow through the folate-dependent one-carbon metabolic network that supplies carbon for the biosynthesis of purines, thymidine and amino acids. The protein is 5-formyltetrahydrofolate cyclo-ligase (FAU1) of Saccharomyces cerevisiae (strain ATCC 204508 / S288c) (Baker's yeast).